Reading from the N-terminus, the 474-residue chain is tRNA-2-methylthio-N(6)-dimethylallyladenosine synthase (474 aa).

Positions Gln3–Gly120 constitute an MTTase N-terminal domain. Cys12, Cys49, Cys83, Cys157, Cys161, and Cys164 together coordinate [4Fe-4S] cluster. The region spanning Arg143–Gln375 is the Radical SAM core domain. The TRAM domain occupies Arg378–Arg441.

Belongs to the methylthiotransferase family. MiaB subfamily. Monomer. Requires [4Fe-4S] cluster as cofactor.

It localises to the cytoplasm. It catalyses the reaction N(6)-dimethylallyladenosine(37) in tRNA + (sulfur carrier)-SH + AH2 + 2 S-adenosyl-L-methionine = 2-methylsulfanyl-N(6)-dimethylallyladenosine(37) in tRNA + (sulfur carrier)-H + 5'-deoxyadenosine + L-methionine + A + S-adenosyl-L-homocysteine + 2 H(+). Catalyzes the methylthiolation of N6-(dimethylallyl)adenosine (i(6)A), leading to the formation of 2-methylthio-N6-(dimethylallyl)adenosine (ms(2)i(6)A) at position 37 in tRNAs that read codons beginning with uridine. The chain is tRNA-2-methylthio-N(6)-dimethylallyladenosine synthase from Histophilus somni (strain 129Pt) (Haemophilus somnus).